The chain runs to 856 residues: Alginate lyase 7 (856 aa).

PbH1 repeat units lie at residues 133-155, 157-179, 180-202, 204-226, 234-256, 257-279, 280-304, and 320-342; these read DYNV…DPHE, TINL…VADF, QIGA…NIVT, SHDI…VVQR, VYNV…LIKM, STDV…RVQG, VEDV…EVIV, and TQNV…GIQE. Hemolysin-type calcium-binding repeat units follow at residues 387-402, 404-421, 422-439, 538-549, 554-563, 565-581, 582-599, 715-731, and 733-749; these read GSTG…IADL, VGGS…NDVL, EGGA…ADIF, GTEGDDSLTGNA, LDGGSGNDSL, GGLG…DDIL, NGGL…ADIF, GGAG…DDIL, and GGSE…ADVF.

This sequence belongs to the D-mannuronate C5-epimerase family. The cofactor is Ca(2+).

It localises to the secreted. The enzyme catalyses Eliminative cleavage of alginate to give oligosaccharides with 4-deoxy-alpha-L-erythro-hex-4-enuronosyl groups at their non-reducing ends and beta-D-mannuronate at their reducing end.. It carries out the reaction [(1-&gt;4)-beta-D-mannuronosyl](n) = [alginate](n). The protein operates within glycan biosynthesis; alginate biosynthesis. With respect to regulation, inhibited by zinc. In terms of biological role, converts beta-D-mannuronic acid (M) to alpha-L-guluronic acid (G). Has both epimerase and lyase activities. Contributes to abortive encystment by degrading the coat from inside the cyst. Important for cyst germination. In Azotobacter vinelandii, this protein is Alginate lyase 7.